The following is a 124-amino-acid chain: Small ribosomal subunit protein uS12 (124 aa).

D89 bears the 3-methylthioaspartic acid mark.

Belongs to the universal ribosomal protein uS12 family. Part of the 30S ribosomal subunit. Contacts proteins S8 and S17. May interact with IF1 in the 30S initiation complex.

Functionally, with S4 and S5 plays an important role in translational accuracy. Its function is as follows. Interacts with and stabilizes bases of the 16S rRNA that are involved in tRNA selection in the A site and with the mRNA backbone. Located at the interface of the 30S and 50S subunits, it traverses the body of the 30S subunit contacting proteins on the other side and probably holding the rRNA structure together. The combined cluster of proteins S8, S12 and S17 appears to hold together the shoulder and platform of the 30S subunit. The sequence is that of Small ribosomal subunit protein uS12 from Shewanella sediminis (strain HAW-EB3).